Here is a 134-residue protein sequence, read N- to C-terminus: Ribonuclease P protein component 2 (134 aa).

The protein belongs to the eukaryotic/archaeal RNase P protein component 2 family. Consists of a catalytic RNA component and at least 4-5 protein subunits. Forms a subcomplex with Rnp3 which stimulates the catalytic RNA.

Its subcellular location is the cytoplasm. The enzyme catalyses Endonucleolytic cleavage of RNA, removing 5'-extranucleotides from tRNA precursor.. Part of ribonuclease P, a protein complex that generates mature tRNA molecules by cleaving their 5'-ends. This Methanocaldococcus jannaschii (strain ATCC 43067 / DSM 2661 / JAL-1 / JCM 10045 / NBRC 100440) (Methanococcus jannaschii) protein is Ribonuclease P protein component 2.